The sequence spans 40 residues: uncharacterized protein (40 aa).

This is an uncharacterized protein from Saccharomyces cerevisiae (strain ATCC 204508 / S288c) (Baker's yeast).